The primary structure comprises 181 residues: Protein Syd (181 aa).

Belongs to the Syd family.

It localises to the cell inner membrane. Its function is as follows. Interacts with the SecY protein in vivo. May bind preferentially to an uncomplexed state of SecY, thus functioning either as a chelating agent for excess SecY in the cell or as a regulatory factor that negatively controls the translocase function. The polypeptide is Protein Syd (Shigella dysenteriae serotype 1 (strain Sd197)).